Reading from the N-terminus, the 70-residue chain is Waprin-Thr1 (70 aa).

An N-terminal signal peptide occupies residues 1–19 (MKARLLLLSVVILVGMVSA). The 51-residue stretch at 20-70 (ENEKAGSCPDVNQPIPPLGLCRNMCESDSGCPNNEKCCKNGCGFMTCSRPR) folds into the WAP domain. 4 disulfides stabilise this stretch: C27-C57, C40-C61, C44-C56, and C50-C66.

This sequence belongs to the venom waprin family. As to expression, expressed by the venom gland.

It is found in the secreted. Functionally, damages membranes of susceptible bacteria. Has no hemolytic activity. Not toxic to mice. Does not inhibit the proteinases elastase and cathepsin G. The polypeptide is Waprin-Thr1 (Thrasops jacksonii (Jackson's black tree snake)).